Consider the following 355-residue polypeptide: DNA polymerase IV (355 aa).

One can recognise a UmuC domain in the interval isoleucine 4 to glycine 185. Mg(2+)-binding residues include aspartate 8 and aspartate 103. Residue glutamate 104 is part of the active site.

Belongs to the DNA polymerase type-Y family. In terms of assembly, monomer. It depends on Mg(2+) as a cofactor.

It localises to the cytoplasm. It carries out the reaction DNA(n) + a 2'-deoxyribonucleoside 5'-triphosphate = DNA(n+1) + diphosphate. In terms of biological role, poorly processive, error-prone DNA polymerase involved in untargeted mutagenesis. Copies undamaged DNA at stalled replication forks, which arise in vivo from mismatched or misaligned primer ends. These misaligned primers can be extended by PolIV. Exhibits no 3'-5' exonuclease (proofreading) activity. May be involved in translesional synthesis, in conjunction with the beta clamp from PolIII. In Pasteurella multocida (strain Pm70), this protein is DNA polymerase IV.